The chain runs to 333 residues: Fructose-1,6-bisphosphatase class 1 (333 aa).

Mg(2+) is bound by residues Glu-90, Asp-112, Leu-114, and Asp-115. Residues 115–118, Asn-207, and Lys-273 each bind substrate; that span reads DGSS. Glu-279 is a Mg(2+) binding site.

Belongs to the FBPase class 1 family. As to quaternary structure, homotetramer. Mg(2+) is required as a cofactor.

The protein resides in the cytoplasm. The enzyme catalyses beta-D-fructose 1,6-bisphosphate + H2O = beta-D-fructose 6-phosphate + phosphate. It functions in the pathway carbohydrate biosynthesis; gluconeogenesis. The chain is Fructose-1,6-bisphosphatase class 1 from Azoarcus sp. (strain BH72).